We begin with the raw amino-acid sequence, 486 residues long: ATP synthase subunit beta (486 aa).

Position 170–177 (170–177 (GGAGVGKT)) interacts with ATP.

This sequence belongs to the ATPase alpha/beta chains family. F-type ATPases have 2 components, CF(1) - the catalytic core - and CF(0) - the membrane proton channel. CF(1) has five subunits: alpha(3), beta(3), gamma(1), delta(1), epsilon(1). CF(0) has three main subunits: a(1), b(2) and c(9-12). The alpha and beta chains form an alternating ring which encloses part of the gamma chain. CF(1) is attached to CF(0) by a central stalk formed by the gamma and epsilon chains, while a peripheral stalk is formed by the delta and b chains.

It localises to the cell membrane. It catalyses the reaction ATP + H2O + 4 H(+)(in) = ADP + phosphate + 5 H(+)(out). Functionally, produces ATP from ADP in the presence of a proton gradient across the membrane. The catalytic sites are hosted primarily by the beta subunits. The chain is ATP synthase subunit beta from Clavibacter sepedonicus (Clavibacter michiganensis subsp. sepedonicus).